The chain runs to 653 residues: Probable sulfate transporter 3.4 (653 aa).

The Cytoplasmic portion of the chain corresponds to 1–92 (MGHGTNRVED…QYDLKLLRSD (92 aa)). The chain crosses the membrane as a helical span at residues 93–113 (VISGLTIASLAIPQGISYAKL). The Extracellular portion of the chain corresponds to 114 to 115 (AN). Residues 116–136 (LPPIVGLYSSFVPPLIYAVLG) form a helical membrane-spanning segment. Residues 137–140 (SSRH) are Cytoplasmic-facing. A helical membrane pass occupies residues 141 to 161 (LAVGPVSIASLVMGSMLSESV). The Extracellular portion of the chain corresponds to 162-167 (SPTQDS). A helical membrane pass occupies residues 168–188 (ILYLKLAFTSTFFAGVFQASL). Over 189 to 194 (GLLRLG) the chain is Cytoplasmic. A helical membrane pass occupies residues 195–215 (FMIDFLSKATLIGFTAGAAVI). Residues 216–247 (VSLQQLKGLLGIVHFTGKMQIVPVMSSVFNHR) are Extracellular-facing. The chain crosses the membrane as a helical span at residues 248-268 (SEWSWETIVMGIGFLSILLTT). At 269–279 (RHISMRKPKLF) the chain is on the cytoplasmic side. Residues 280–300 (WISAASPLASVIISTLLVYLI) traverse the membrane as a helical segment. The Extracellular segment spans residues 301–331 (RSKTHAISFIGHLPKGLNPPSLNMLYFSGAH). Residues 332 to 352 (LALAIKTGIITGILSLTEGIA) traverse the membrane as a helical segment. The Cytoplasmic segment spans residues 353–370 (VGRTFASLKNYQVNGNKE). A helical transmembrane segment spans residues 371-391 (MMAIGFMNMAGSCTSCYVTTG). The Extracellular portion of the chain corresponds to 392–407 (SFSRSAVNYNAGAKTA). A helical membrane pass occupies residues 408–428 (VSNIVMASAVLVTLLFLMPLF). The Cytoplasmic portion of the chain corresponds to 429–433 (YYTPN). A helical membrane pass occupies residues 434 to 454 (VILAAIILTAVIGLIDYQAAY). Residues 455–471 (KLWKVDKFDFFTCLCSF) are Extracellular-facing. Residues 472–492 (FGVLFVSVPLGLAIAVAVSVI) traverse the membrane as a helical segment. Over 493-653 (KILLHVTRPN…SSTWKANGQP (161 aa)) the chain is Cytoplasmic. Residues 520-643 (RYREASRIPG…LTVGEAVADL (124 aa)) form the STAS domain.

It belongs to the SLC26A/SulP transporter (TC 2.A.53) family.

The protein resides in the membrane. In terms of biological role, h(+)/sulfate cotransporter that may play a role in the regulation of sulfate assimilation. This is Probable sulfate transporter 3.4 (SULTR3;4) from Arabidopsis thaliana (Mouse-ear cress).